Reading from the N-terminus, the 224-residue chain is MNQEEHVKLLGLWGSPFSKRVEMVLKLKGIPYEYIEEDVYGNRSPMLLKYNPIHKKVPVLIHNGRSIAESLVIVEYIEDTWKTTHTILPQDPYERAMARFWAKYVDEKVMLAVKKACWGPESEREKEVKEAYEGLKCLEKELGDKLFFGGETIGFVDIAADFIGYWLGIFQEASGVTIMTAEEFPKLQRWSEDFVGNNFIKEVLPPKEKLVAVLKAMFGSVTSN.

The region spanning 5–85 (EHVKLLGLWG…YIEDTWKTTH (81 aa)) is the GST N-terminal domain. Residues 15–16 (SP), 42–43 (NR), 56–57 (KV), and 69–70 (ES) contribute to the glutathione site. Positions 91 to 213 (DPYERAMARF…LPPKEKLVAV (123 aa)) constitute a GST C-terminal domain. Threonine 152 carries the phosphothreonine modification.

It belongs to the GST superfamily. Tau family.

Its subcellular location is the cytoplasm. The protein resides in the cytosol. It carries out the reaction RX + glutathione = an S-substituted glutathione + a halide anion + H(+). Functionally, may be involved in the conjugation of reduced glutathione to a wide number of exogenous and endogenous hydrophobic electrophiles and have a detoxification role against certain herbicides. This chain is Glutathione S-transferase U8 (GSTU8), found in Arabidopsis thaliana (Mouse-ear cress).